Consider the following 697-residue polypeptide: T-related protein (697 aa).

The disordered stretch occupies residues 1–60 (MTTSHILSAVDPTTGLSGNVSGGGGGGGAGGGAGSGSPQHVTHNGHGHGHGLGGVAAVSG). Composition is skewed to gly residues over residues 20–35 (VSGG…GAGS) and 50–60 (HGLGGVAAVSG). Residues 96–264 (LWLRFQNLTN…YNPFAKAFLD (169 aa)) constitute a DNA-binding region (T-box). A compositionally biased stretch (low complexity) spans 316-330 (SVSSAESVGPSSGGS). Disordered regions lie at residues 316–407 (SVSS…GGIG) and 462–488 (VCSG…TSSP). The segment covering 337–351 (SLSSRSVAPTRTTPY) has biased composition (polar residues). 3 stretches are compositionally biased toward low complexity: residues 352 to 373 (SRPR…SSTS), 381 to 401 (QTPT…VSSS), and 469 to 488 (SSHN…TSSP).

The protein resides in the nucleus. Required for the specification of the hindgut and anal pads. In Drosophila melanogaster (Fruit fly), this protein is T-related protein (byn).